The following is a 247-amino-acid chain: Centromere protein H (247 aa).

M1 is subject to N-acetylmethionine. Positions 1–14 are enriched in acidic residues; sequence MEEQPQMQDADEPA. The segment at 1–34 is disordered; the sequence is MEEQPQMQDADEPADSGGEGRAGGPPQVAGAQAA. S16 is modified (phosphoserine). Over residues 24-34 the composition is skewed to low complexity; sequence GPPQVAGAQAA. Residues 47–192 adopt a coiled-coil conformation; sequence RAQTKQQLLE…KIDLDSMENS (146 aa). K67 participates in a covalent cross-link: Glycyl lysine isopeptide (Lys-Gly) (interchain with G-Cter in SUMO2). Phosphothreonine is present on T68.

This sequence belongs to the CENP-H/MCM16 family. In terms of assembly, self-associates. Component of the CENPA-NAC complex, at least composed of CENPA, CENPC, CENPH, CENPM, CENPN, CENPT and CENPU. The CENPA-NAC complex interacts with the CENPA-CAD complex, composed of CENPI, CENPK, CENPL, CENPO, CENPP, CENPQ, CENPR and CENPS. Interacts directly with CENPK. Interacts with KIF2C and NDC80. Interacts with TRIM36.

The protein localises to the nucleus. Its subcellular location is the chromosome. The protein resides in the centromere. It localises to the kinetochore. In terms of biological role, component of the CENPA-NAC (nucleosome-associated) complex, a complex that plays a central role in assembly of kinetochore proteins, mitotic progression and chromosome segregation. The CENPA-NAC complex recruits the CENPA-CAD (nucleosome distal) complex and may be involved in incorporation of newly synthesized CENPA into centromeres. Required for chromosome congression and efficiently align the chromosomes on a metaphase plate. This is Centromere protein H from Homo sapiens (Human).